We begin with the raw amino-acid sequence, 110 residues long: Vacuolar ATPase assembly integral membrane protein VMA21 (110 aa).

Residues 1–28 (MTTRRIIGQDGEEKTYLDVDPRGPPGPS) are disordered. Over 1–44 (MTTRRIIGQDGEEKTYLDVDPRGPPGPSNISPAVPASVIWKLMS) the chain is Cytoplasmic. Basic and acidic residues predominate over residues 11–21 (GEEKTYLDVDP). The helical transmembrane segment at 45-65 (FTFAMITLPIGTYFFTVNYVF) threads the bilayer. The Lumenal segment spans residues 66–71 (GGNATY). The chain crosses the membrane as a helical span at residues 72 to 92 (AGALAAIMANVVLIAYVIMAF). Over 93 to 110 (KDDQAEQAEDAREAKKEL) the chain is Cytoplasmic. The Prevents secretion from ER signature appears at 107–110 (KKEL).

This sequence belongs to the VMA21 family.

The protein resides in the endoplasmic reticulum membrane. It localises to the endoplasmic reticulum-Golgi intermediate compartment membrane. The protein localises to the cytoplasmic vesicle. Its subcellular location is the COPII-coated vesicle membrane. Functionally, required for the assembly of the V0 complex of the vacuolar ATPase (V-ATPase) in the endoplasmic reticulum. This is Vacuolar ATPase assembly integral membrane protein VMA21 from Phaeosphaeria nodorum (strain SN15 / ATCC MYA-4574 / FGSC 10173) (Glume blotch fungus).